Consider the following 356-residue polypeptide: Protein RecA (356 aa).

Glycine 68–threonine 75 contacts ATP.

Belongs to the RecA family.

The protein resides in the cytoplasm. Its function is as follows. Can catalyze the hydrolysis of ATP in the presence of single-stranded DNA, the ATP-dependent uptake of single-stranded DNA by duplex DNA, and the ATP-dependent hybridization of homologous single-stranded DNAs. It interacts with LexA causing its activation and leading to its autocatalytic cleavage. The polypeptide is Protein RecA (Thermotoga sp. (strain RQ2)).